Consider the following 275-residue polypeptide: MSSFGYRTLTVALFALICCPGSDEKVFEVHVRPKKLAVEPKASLEVNCSTTCNQPEVGGLETSLDKILLDEQAQWKHYLVSNISHDTVLQCHFTCSGKQESMNSNVSVYQPPRQVILTLQPTLVAVGKSFTIECRVPTVEPLDSLTLFLFRGNETLHNQTFGKAAPALQEATATFNSTADREDGHRNFSCLAVLDLISRGGNIFQEHSAPKMLEIYEPVSDSQMVIIVTVVSVLLSLFVTSVLLCFIFGQHLRQQRMGTYGVRAAWRRLPQAFRP.

Residues 1–24 (MSSFGYRTLTVALFALICCPGSDE) form the signal peptide. Topologically, residues 25–223 (KVFEVHVRPK…EIYEPVSDSQ (199 aa)) are extracellular. The Ig-like C2-type 1 domain maps to 41–98 (KASLEVNCSTTCNQPEVGGLETSLDKILLDEQAQWKHYLVSNISHDTVLQCHFTCSGK). 7 N-linked (GlcNAc...) asparagine glycosylation sites follow: Asn-47, Asn-82, Asn-105, Asn-153, Asn-158, Asn-176, and Asn-187. Cystine bridges form between Cys-48–Cys-91 and Cys-52–Cys-95. The region spanning 127–197 (GKSFTIECRV…FSCLAVLDLI (71 aa)) is the Ig-like C2-type 2 domain. Residues Cys-134 and Cys-190 are joined by a disulfide bond. A helical transmembrane segment spans residues 224-248 (MVIIVTVVSVLLSLFVTSVLLCFIF). Over 249–275 (GQHLRQQRMGTYGVRAAWRRLPQAFRP) the chain is Cytoplasmic. The segment at 251 to 275 (HLRQQRMGTYGVRAAWRRLPQAFRP) is required for interaction with EZR, MSN and RDX and co-localization to microvilli.

The protein belongs to the immunoglobulin superfamily. ICAM family. Interacts with RDX, EZR and MSN.

It localises to the membrane. The protein localises to the cell projection. It is found in the microvillus. ICAM proteins are ligands for the leukocyte adhesion protein LFA-1 (integrin alpha-L/beta-2). ICAM2 may play a role in lymphocyte recirculation by blocking LFA-1-dependent cell adhesion. It mediates adhesive interactions important for antigen-specific immune response, NK-cell mediated clearance, lymphocyte recirculation, and other cellular interactions important for immune response and surveillance. This chain is Intercellular adhesion molecule 2 (ICAM2), found in Gorilla gorilla gorilla (Western lowland gorilla).